The following is a 542-amino-acid chain: Mitogen-activated protein kinase 14 (542 aa).

The region spanning 13–304 (YKIEEVIGKG…AEEALADPYF (292 aa)) is the Protein kinase domain. ATP is bound by residues 19-27 (IGKGSYGVV) and K42. The active-site Proton acceptor is D139. Residue T175 is modified to Phosphothreonine. The TXY motif lies at 175–177 (TDY). Y177 is subject to Phosphotyrosine. Disordered regions lie at residues 388-412 (STAA…DNRP) and 482-542 (RNPA…SGHW). Polar residues predominate over residues 488 to 507 (PNSSVPLGSSYPRRNQTCKS).

This sequence belongs to the protein kinase superfamily. CMGC Ser/Thr protein kinase family. MAP kinase subfamily. In terms of processing, dually phosphorylated on Thr-175 and Tyr-177, which activates the enzyme.

It catalyses the reaction L-seryl-[protein] + ATP = O-phospho-L-seryl-[protein] + ADP + H(+). It carries out the reaction L-threonyl-[protein] + ATP = O-phospho-L-threonyl-[protein] + ADP + H(+). Its activity is regulated as follows. Activated by threonine and tyrosine phosphorylation. This is Mitogen-activated protein kinase 14 (MPK14) from Oryza sativa subsp. japonica (Rice).